A 180-amino-acid polypeptide reads, in one-letter code: Large ribosomal subunit protein uL5 (180 aa).

It belongs to the universal ribosomal protein uL5 family. In terms of assembly, part of the 50S ribosomal subunit; part of the 5S rRNA/L5/L18/L25 subcomplex. Contacts the 5S rRNA and the P site tRNA. Forms a bridge to the 30S subunit in the 70S ribosome.

Its function is as follows. This is one of the proteins that bind and probably mediate the attachment of the 5S RNA into the large ribosomal subunit, where it forms part of the central protuberance. In the 70S ribosome it contacts protein S13 of the 30S subunit (bridge B1b), connecting the 2 subunits; this bridge is implicated in subunit movement. Contacts the P site tRNA; the 5S rRNA and some of its associated proteins might help stabilize positioning of ribosome-bound tRNAs. This Lactococcus lactis subsp. lactis (strain IL1403) (Streptococcus lactis) protein is Large ribosomal subunit protein uL5.